The following is a 312-amino-acid chain: MLLVKMTTTIFYADDLLQALQQAKAEKNFSSVFSLDWDKLRIAKRNTSVKYVTVNVTVKGKKAPLMFSFQNEKHVGTIPPSTDEEVIRMNAENPKFLVKRRDRDPCLQFNKYKISPPLEDDGLTVKKNEQGEEIYPGDEEKSKLFQIIELLEEAFEDAVQKGPETMKTKNIIKLVQRKISSSAIKNADKPLPNPIARIRIKVNPTTTMLAPILLDKNKPITLQNGKTSFEELKDEDGTKANPDNIHKLIESHSIHDGIINARSICISNMGISFPLCLEMGVVKVFEKNNGIDVDSIYGSDDITNLINQVAIA.

This sequence belongs to the asfivirus CP312R family.

It is found in the virion. This is an uncharacterized protein from African swine fever virus (isolate Tick/Malawi/Lil 20-1/1983) (ASFV).